Consider the following 170-residue polypeptide: Adenine phosphoribosyltransferase (170 aa).

Belongs to the purine/pyrimidine phosphoribosyltransferase family. In terms of assembly, homodimer.

Its subcellular location is the cytoplasm. It carries out the reaction AMP + diphosphate = 5-phospho-alpha-D-ribose 1-diphosphate + adenine. The protein operates within purine metabolism; AMP biosynthesis via salvage pathway; AMP from adenine: step 1/1. Catalyzes a salvage reaction resulting in the formation of AMP, that is energically less costly than de novo synthesis. The sequence is that of Adenine phosphoribosyltransferase from Halothermothrix orenii (strain H 168 / OCM 544 / DSM 9562).